The chain runs to 253 residues: MKTYRIGQIVPSSNTTMETEIPAMLQARYAEFPEERFTFHSSRMRMMHVNPEELKAMDIASDRCAVELSDARMSVMAYACLVAIMAQGDGYHRVSQARLQNTVKENGVEIPVLSSAGALVDTLKEFGYKKVSIITPYMKPLTKRVADYIEAEGIEVQDSISLEVSDNLEVGLLNPENLLEHVKRLNHDGVDAVILSACVQMPSLPAIQRAQDQIGKPVLSAAVWTVYQMLKNLGLETRVPNAGHILSGVKPQA.

Substrate contacts are provided by residues N14, 80–82, Y137, and N167; that span reads CLV. C80 (nucleophile) is an active-site residue. C80 is subject to S-(2-succinyl)cysteine. The active-site Proton donor is C198. 199–200 serves as a coordination point for substrate; it reads VQ.

It belongs to the maleate isomerase family. In terms of assembly, homodimer.

It catalyses the reaction maleate = fumarate. In terms of biological role, catalyzes cis-trans isomerization of the C2-C3 double bond in maleate to yield fumarate. The polypeptide is Maleate isomerase (Alcaligenes faecalis).